A 484-amino-acid polypeptide reads, in one-letter code: Nuclear rim protein 1 (484 aa).

Ser3 carries the post-translational modification Phosphoserine. Helical transmembrane passes span 145-165 (FTIF…MFGY) and 237-257 (IPTN…IVFL). The tract at residues 416–457 (SSNENLEKGGAFLPNQDQNRPSKSLSPLRKTPLSARQKRFEG) is disordered. Ser417 is subject to Phosphoserine. Polar residues predominate over residues 430–440 (NQDQNRPSKSL). A Phosphoserine modification is found at Ser474.

It belongs to the NUR1 family. In terms of assembly, interacts with CSM1.

It localises to the nucleus membrane. In terms of biological role, member of a perinuclear network that controls recombination at multiple loci to maintain genome stability. Required for rDNA repeat stability. This Saccharomyces cerevisiae (strain JAY291) (Baker's yeast) protein is Nuclear rim protein 1 (NUR1).